Consider the following 309-residue polypeptide: 2-dehydro-3-deoxygluconokinase (309 aa).

Substrate contacts are provided by residues 34-38, Tyr89, 103-105, and Arg167; these read GAEVN and YYR. ATP contacts are provided by residues 165-167, Ser193, 219-225, 248-251, and Asn275; these read NYR, KRGAKGA, and GAGD. Asp251 contributes to the substrate binding site. Asp251 acts as the Proton acceptor in catalysis. Asp287 provides a ligand contact to substrate.

This sequence belongs to the carbohydrate kinase pfkB family. As to quaternary structure, homohexamer; trimer of dimers.

It catalyses the reaction 2-dehydro-3-deoxy-D-gluconate + ATP = 2-dehydro-3-deoxy-6-phospho-D-gluconate + ADP + H(+). The protein operates within carbohydrate acid metabolism; 2-dehydro-3-deoxy-D-gluconate degradation; D-glyceraldehyde 3-phosphate and pyruvate from 2-dehydro-3-deoxy-D-gluconate: step 1/2. Its function is as follows. Involved in the degradation of glucose via the semi-phosphorylative Entner-Doudoroff pathway. Catalyzes the phosphorylation of 2-keto-3-deoxygluconate (KDG) to produce 2-keto-3-deoxy-6-phosphogluconate (KDPG). In Thermus thermophilus (strain ATCC 27634 / DSM 579 / HB8), this protein is 2-dehydro-3-deoxygluconokinase (kdgK).